Consider the following 348-residue polypeptide: Bombesin receptor-activated protein C6orf89 homolog (348 aa).

The Cytoplasmic portion of the chain corresponds to 1–58 (MDLAANEISIYDKLSETVDLVRQTGHQCGMSEKAIEKFIRQLLEKNEPQRGPPQYPLL). Residues 59 to 79 (IAMYKVLLTLGLILFTAYFVI) traverse the membrane as a helical segment. Residues 80–348 (QPFSSLAPEP…ICDGTTLSEL (269 aa)) are Extracellular-facing.

Homodimer. Interacts with BRS3. Interacts (via N-terminus) with SIN3B. Post-translationally, glycosylated.

Its subcellular location is the golgi apparatus membrane. It localises to the cytoplasm. Exhibits histone deacetylase (HDAC) enhancer properties. May play a role in cell cycle progression and wound repair of bronchial epithelial cells. The chain is Bombesin receptor-activated protein C6orf89 homolog from Rattus norvegicus (Rat).